We begin with the raw amino-acid sequence, 463 residues long: Argininosuccinate lyase (463 aa).

This sequence belongs to the lyase 1 family. Argininosuccinate lyase subfamily.

The protein localises to the cytoplasm. The catalysed reaction is 2-(N(omega)-L-arginino)succinate = fumarate + L-arginine. It functions in the pathway amino-acid biosynthesis; L-arginine biosynthesis; L-arginine from L-ornithine and carbamoyl phosphate: step 3/3. This chain is Argininosuccinate lyase, found in Ruegeria pomeroyi (strain ATCC 700808 / DSM 15171 / DSS-3) (Silicibacter pomeroyi).